The chain runs to 628 residues: Phosphomethylpyrimidine synthase (628 aa).

The interval methionine 1–glutamine 22 is disordered. Residues threonine 7–glutamine 22 are compositionally biased toward polar residues. Substrate is bound by residues asparagine 232, methionine 261, tyrosine 290, histidine 326, serine 346–glycine 348, aspartate 387–arginine 390, and glutamate 426. Histidine 430 provides a ligand contact to Zn(2+). Tyrosine 453 is a substrate binding site. Histidine 494 contacts Zn(2+). The [4Fe-4S] cluster site is built by cysteine 574, cysteine 577, and cysteine 582.

Belongs to the ThiC family. Homodimer. [4Fe-4S] cluster is required as a cofactor.

It catalyses the reaction 5-amino-1-(5-phospho-beta-D-ribosyl)imidazole + S-adenosyl-L-methionine = 4-amino-2-methyl-5-(phosphooxymethyl)pyrimidine + CO + 5'-deoxyadenosine + formate + L-methionine + 3 H(+). The protein operates within cofactor biosynthesis; thiamine diphosphate biosynthesis. Its function is as follows. Catalyzes the synthesis of the hydroxymethylpyrimidine phosphate (HMP-P) moiety of thiamine from aminoimidazole ribotide (AIR) in a radical S-adenosyl-L-methionine (SAM)-dependent reaction. In Pseudomonas putida (strain W619), this protein is Phosphomethylpyrimidine synthase.